A 722-amino-acid chain; its full sequence is Probable cation-transporting ATPase HI_0290 (722 aa).

Positions 9–75 constitute an HMA domain; that stretch reads KKISIQIGGM…IIHKTGFSAH (67 aa). The a metal cation site is built by C20 and C23. Helical transmembrane passes span 94–114, 118–138, 157–177, 180–200, 340–360, and 373–393; these read LIVL…MIGG, LMLP…WLAI, VLVS…LFYH, HAMG…VSLG, VFVP…YILT, and VLVI…IMVG. D422 (4-aspartylphosphate intermediate) is an active-site residue. 4 helical membrane-spanning segments follow: residues 523-543, 608-628, 675-695, and 697-717; these read IWQI…GAFA, LGHI…LASA, LFFA…GFLS, and IIAG…ALRL. 2 residues coordinate Mg(2+): D617 and D621.

Belongs to the cation transport ATPase (P-type) (TC 3.A.3) family. Type IB subfamily.

Its subcellular location is the cell membrane. It carries out the reaction ATP + H2O = ADP + phosphate + H(+). In Haemophilus influenzae (strain ATCC 51907 / DSM 11121 / KW20 / Rd), this protein is Probable cation-transporting ATPase HI_0290.